A 255-amino-acid polypeptide reads, in one-letter code: Glutamate racemase (255 aa).

Substrate is bound by residues D7–S8 and Y39–G40. The active-site Proton donor/acceptor is the C70. A substrate-binding site is contributed by N71–T72. The active-site Proton donor/acceptor is the C181. T182–H183 is a binding site for substrate.

The protein belongs to the aspartate/glutamate racemases family.

It carries out the reaction L-glutamate = D-glutamate. It functions in the pathway cell wall biogenesis; peptidoglycan biosynthesis. In terms of biological role, provides the (R)-glutamate required for cell wall biosynthesis. The protein is Glutamate racemase of Helicobacter pylori (strain ATCC 700392 / 26695) (Campylobacter pylori).